The following is a 486-amino-acid chain: Achaete-scute complex protein T8 (486 aa).

2 disordered regions span residues 1-26 and 75-158; these read MAAL…GIKT and AAST…LPLP. Residues 75–86 show a composition bias toward polar residues; it reads AASTTNTTPISS. One can recognise a bHLH domain in the interval 159 to 223; it reads QAVARRNARE…RMAVEYIRSL (65 aa).

As to quaternary structure, efficient DNA binding requires dimerization with another bHLH protein. As to expression, l(1)SC, SC and AC strongly label the presumptive stomatogastric nervous system, while ASE is more prominent in the presumptive procephalic lobe.

Its function is as follows. Involved in the determination of the neuronal precursors of optic lobes in the central nervous system. The polypeptide is Achaete-scute complex protein T8 (ase) (Drosophila melanogaster (Fruit fly)).